A 321-amino-acid polypeptide reads, in one-letter code: PI-PLC X domain-containing protein 3 (321 aa).

Residues 22 to 197 (SIHSIPLTNL…DYQVLVFYHS (176 aa)) enclose the PI-PLC X-box domain. Catalysis depends on residues H37 and H114.

This is PI-PLC X domain-containing protein 3 (PLCXD3) from Bos taurus (Bovine).